A 525-amino-acid chain; its full sequence is Averantin hydroxylase (525 aa).

Residues 36–56 (VLATFVAGIGALLLWTLTTVF) traverse the membrane as a helical segment. Residue Asn315 is glycosylated (N-linked (GlcNAc...) asparagine). Cys462 is a heme binding site.

It belongs to the cytochrome P450 family. Requires heme as cofactor.

Its subcellular location is the membrane. It catalyses the reaction (1'S)-averantin + reduced [NADPH--hemoprotein reductase] + O2 = (1'S,5'R)-5'-hydroxyaverantin + oxidized [NADPH--hemoprotein reductase] + H2O. The catalysed reaction is (1'S)-averantin + reduced [NADPH--hemoprotein reductase] + O2 = (1'S,5'S)-5'-hydroxyaverantin + oxidized [NADPH--hemoprotein reductase] + H2O + H(+). The protein operates within mycotoxin biosynthesis. Averantin hydroxylase; part of the fragmented gene cluster that mediates the biosynthesis of dothistromin (DOTH), a polyketide toxin very similar in structure to the aflatoxin precursor, versicolorin B. The first step of the pathway is the conversion of acetate to norsolorinic acid (NOR) and requires the fatty acid synthase subunits hexA and hexB, as well as the polyketide synthase pksA. PksA combines a hexanoyl starter unit and 7 malonyl-CoA extender units to synthesize the precursor NOR. The hexanoyl starter unit is provided to the acyl-carrier protein (ACP) domain by the fungal fatty acid synthase hexA/hexB. The second step is the conversion of NOR to averantin (AVN) and requires the norsolorinic acid ketoreductase nor1, which catalyzes the dehydration of norsolorinic acid to form (1'S)-averantin. The cytochrome P450 monooxygenase avnA then catalyzes the hydroxylation of AVN to 5'hydroxyaverantin (HAVN). The next step is performed by adhA that transforms HAVN to averufin (AVF). Averufin might then be converted to hydroxyversicolorone by cypX and avfA. Hydroxyversicolorone is further converted versiconal hemiacetal acetate (VHA) by moxY. VHA is then the substrate for the versiconal hemiacetal acetate esterase est1 to yield versiconal (VAL). Versicolorin B synthase vbsA then converts VAL to versicolorin B (VERB) by closing the bisfuran ring. Then, the activity of the versicolorin B desaturase verB leads to versicolorin A (VERA). DotB, a predicted chloroperoxidase, may perform epoxidation of the A-ring of VERA. Alternatively, a cytochrome P450, such as cypX or avnA could catalyze this step. It is also possible that another, uncharacterized, cytochrome P450 enzyme is responsible for this step. Opening of the epoxide could potentially be achieved by the epoxide hydrolase epoA. However, epoA seems not to be required for DOTH biosynthesis, but other epoxide hydrolases may have the ability to complement this hydrolysis. Alternatively, opening of the epoxide ring could be achieved non-enzymatically. The next step is the deoxygenation of ring A to yield the 5,8-dihydroxyanthraquinone which is most likely catalyzed by the NADPH dehydrogenase encoded by ver1. The last stages of DOTH biosynthesis are proposed to involve hydroxylation of the bisfuran. OrdB and norB might have oxidative roles here. An alternative possibility is that cytochrome P450 monoogenases such as avnA and cypX might perform these steps in addition to previously proposed steps. This is Averantin hydroxylase from Dothistroma septosporum (strain NZE10 / CBS 128990) (Red band needle blight fungus).